The sequence spans 317 residues: NADPH-dependent D-xylose reductase (317 aa).

Tyr-47 (proton donor) is an active-site residue. His-109 serves as a coordination point for substrate. Residues 164 to 165 (SN), 213 to 222 (SSFGPQSFVE), and 269 to 279 (KSNNPDRLLSN) contribute to the NADP(+) site.

Belongs to the aldo/keto reductase family.

The enzyme catalyses xylitol + NAD(+) = D-xylose + NADH + H(+). It catalyses the reaction xylitol + NADP(+) = D-xylose + NADPH + H(+). It participates in carbohydrate metabolism; D-xylose degradation. In terms of biological role, reduces D-xylose into xylitol. Preferentially utilizes NADPH as a cosubstrate. In Meyerozyma guilliermondii (strain ATCC 6260 / CBS 566 / DSM 6381 / JCM 1539 / NBRC 10279 / NRRL Y-324) (Yeast), this protein is NADPH-dependent D-xylose reductase (XYL1).